We begin with the raw amino-acid sequence, 348 residues long: Protein RecA (348 aa).

ATP is bound at residue 67–74 (GPESSGKT).

It belongs to the RecA family.

The protein resides in the cytoplasm. Functionally, can catalyze the hydrolysis of ATP in the presence of single-stranded DNA, the ATP-dependent uptake of single-stranded DNA by duplex DNA, and the ATP-dependent hybridization of homologous single-stranded DNAs. It interacts with LexA causing its activation and leading to its autocatalytic cleavage. This chain is Protein RecA, found in Cutibacterium acnes (Propionibacterium acnes).